The chain runs to 469 residues: UDP-N-acetylmuramate--L-alanine ligase (469 aa).

ATP is bound at residue glycine 114–threonine 120.

This sequence belongs to the MurCDEF family.

The protein resides in the cytoplasm. It catalyses the reaction UDP-N-acetyl-alpha-D-muramate + L-alanine + ATP = UDP-N-acetyl-alpha-D-muramoyl-L-alanine + ADP + phosphate + H(+). It participates in cell wall biogenesis; peptidoglycan biosynthesis. Its function is as follows. Cell wall formation. The sequence is that of UDP-N-acetylmuramate--L-alanine ligase from Chlorobium phaeovibrioides (strain DSM 265 / 1930) (Prosthecochloris vibrioformis (strain DSM 265)).